The sequence spans 662 residues: Transketolase (662 aa).

Residue H28 coordinates substrate. Thiamine diphosphate is bound by residues H68 and 115–117 (GPL). D156 contacts Mg(2+). Residues G157 and N186 each contribute to the thiamine diphosphate site. Positions 186 and 188 each coordinate Mg(2+). Residues H261, R356, and S383 each coordinate substrate. A thiamine diphosphate-binding site is contributed by H261. E410 functions as the Proton donor in the catalytic mechanism. F436 lines the thiamine diphosphate pocket. The substrate site is built by H460, D468, and R519.

This sequence belongs to the transketolase family. In terms of assembly, homodimer. Mg(2+) is required as a cofactor. Ca(2+) serves as cofactor. It depends on Mn(2+) as a cofactor. The cofactor is Co(2+). Requires thiamine diphosphate as cofactor.

It carries out the reaction D-sedoheptulose 7-phosphate + D-glyceraldehyde 3-phosphate = aldehydo-D-ribose 5-phosphate + D-xylulose 5-phosphate. It functions in the pathway carbohydrate biosynthesis; Calvin cycle. It participates in carbohydrate degradation; pentose phosphate pathway. Catalyzes the transfer of a two-carbon ketol group from a ketose donor to an aldose acceptor, via a covalent intermediate with the cofactor thiamine pyrophosphate. In Staphylococcus epidermidis (strain ATCC 35984 / DSM 28319 / BCRC 17069 / CCUG 31568 / BM 3577 / RP62A), this protein is Transketolase (tkt).